A 347-amino-acid polypeptide reads, in one-letter code: UPF0284 protein M1627_0030 (347 aa).

It belongs to the UPF0284 family.

The sequence is that of UPF0284 protein M1627_0030 from Saccharolobus islandicus (strain M.16.27) (Sulfolobus islandicus).